Here is a 260-residue protein sequence, read N- to C-terminus: Triosephosphate isomerase (260 aa).

Position 11–13 (11–13 (NWK)) interacts with substrate. Histidine 103 serves as the catalytic Electrophile. Residue glutamate 175 is the Proton acceptor of the active site. Residues glycine 181, serine 220, and 241 to 242 (GG) contribute to the substrate site.

This sequence belongs to the triosephosphate isomerase family. Homodimer.

It is found in the cytoplasm. It catalyses the reaction D-glyceraldehyde 3-phosphate = dihydroxyacetone phosphate. The protein operates within carbohydrate biosynthesis; gluconeogenesis. It participates in carbohydrate degradation; glycolysis; D-glyceraldehyde 3-phosphate from glycerone phosphate: step 1/1. In terms of biological role, involved in the gluconeogenesis. Catalyzes stereospecifically the conversion of dihydroxyacetone phosphate (DHAP) to D-glyceraldehyde-3-phosphate (G3P). This is Triosephosphate isomerase from Shewanella sp. (strain MR-7).